A 238-amino-acid polypeptide reads, in one-letter code: Ribosomal RNA small subunit methyltransferase G (238 aa).

Residues glycine 99, leucine 104, 122–124 (DAT), 150–151 (VE), and arginine 164 contribute to the S-adenosyl-L-methionine site.

The protein belongs to the methyltransferase superfamily. RNA methyltransferase RsmG family.

It is found in the cytoplasm. In terms of biological role, specifically methylates the N7 position of a guanine in 16S rRNA. The protein is Ribosomal RNA small subunit methyltransferase G of Chlorobium luteolum (strain DSM 273 / BCRC 81028 / 2530) (Pelodictyon luteolum).